The chain runs to 150 residues: Large ribosomal subunit protein eL19 (150 aa).

Residues 55-89 (IKGQSRYRAKIRHEQKKKGRHRGPGSRKGKKTARM) form a disordered region.

Belongs to the eukaryotic ribosomal protein eL19 family. Part of the 50S ribosomal subunit.

Functionally, binds to the 23S rRNA. The protein is Large ribosomal subunit protein eL19 of Pyrococcus furiosus (strain ATCC 43587 / DSM 3638 / JCM 8422 / Vc1).